We begin with the raw amino-acid sequence, 425 residues long: Histidine--tRNA ligase (425 aa).

The protein belongs to the class-II aminoacyl-tRNA synthetase family. As to quaternary structure, homodimer.

The protein localises to the cytoplasm. It catalyses the reaction tRNA(His) + L-histidine + ATP = L-histidyl-tRNA(His) + AMP + diphosphate + H(+). This is Histidine--tRNA ligase from Listeria monocytogenes serotype 4b (strain F2365).